We begin with the raw amino-acid sequence, 282 residues long: Acetyl-coenzyme A carboxylase carboxyl transferase subunit beta (282 aa).

A CoA carboxyltransferase N-terminal domain is found at 26-282; sequence GLWHQTPTGK…VSKTVKLLVH (257 aa).

This sequence belongs to the AccD/PCCB family. As to quaternary structure, acetyl-CoA carboxylase is a heterohexamer composed of biotin carboxyl carrier protein (AccB), biotin carboxylase (AccC) and two subunits each of ACCase subunit alpha (AccA) and ACCase subunit beta (AccD).

It localises to the cytoplasm. It carries out the reaction N(6)-carboxybiotinyl-L-lysyl-[protein] + acetyl-CoA = N(6)-biotinyl-L-lysyl-[protein] + malonyl-CoA. It participates in lipid metabolism; malonyl-CoA biosynthesis; malonyl-CoA from acetyl-CoA: step 1/1. Component of the acetyl coenzyme A carboxylase (ACC) complex. Biotin carboxylase (BC) catalyzes the carboxylation of biotin on its carrier protein (BCCP) and then the CO(2) group is transferred by the transcarboxylase to acetyl-CoA to form malonyl-CoA. The sequence is that of Acetyl-coenzyme A carboxylase carboxyl transferase subunit beta from Flavobacteriaceae bacterium (strain 3519-10).